Reading from the N-terminus, the 355-residue chain is uncharacterized protein (355 aa).

This sequence belongs to the TmcAL family.

This is an uncharacterized protein from Methanocaldococcus jannaschii (strain ATCC 43067 / DSM 2661 / JAL-1 / JCM 10045 / NBRC 100440) (Methanococcus jannaschii).